We begin with the raw amino-acid sequence, 240 residues long: Sugar fermentation stimulation protein homolog (240 aa).

Belongs to the SfsA family.

This chain is Sugar fermentation stimulation protein homolog, found in Saccharolobus islandicus (strain M.14.25 / Kamchatka #1) (Sulfolobus islandicus).